The primary structure comprises 268 residues: 3-deoxy-manno-octulosonate cytidylyltransferase (268 aa).

This sequence belongs to the KdsB family.

It localises to the cytoplasm. It catalyses the reaction 3-deoxy-alpha-D-manno-oct-2-ulosonate + CTP = CMP-3-deoxy-beta-D-manno-octulosonate + diphosphate. It participates in nucleotide-sugar biosynthesis; CMP-3-deoxy-D-manno-octulosonate biosynthesis; CMP-3-deoxy-D-manno-octulosonate from 3-deoxy-D-manno-octulosonate and CTP: step 1/1. Its pathway is bacterial outer membrane biogenesis; lipopolysaccharide biosynthesis. In terms of biological role, activates KDO (a required 8-carbon sugar) for incorporation into bacterial lipopolysaccharide in Gram-negative bacteria. In Psychrobacter arcticus (strain DSM 17307 / VKM B-2377 / 273-4), this protein is 3-deoxy-manno-octulosonate cytidylyltransferase.